Here is a 155-residue protein sequence, read N- to C-terminus: 3-hydroxyacyl-[acyl-carrier-protein] dehydratase FabZ (155 aa).

H61 is a catalytic residue.

This sequence belongs to the thioester dehydratase family. FabZ subfamily.

Its subcellular location is the cytoplasm. The enzyme catalyses a (3R)-hydroxyacyl-[ACP] = a (2E)-enoyl-[ACP] + H2O. Functionally, involved in unsaturated fatty acids biosynthesis. Catalyzes the dehydration of short chain beta-hydroxyacyl-ACPs and long chain saturated and unsaturated beta-hydroxyacyl-ACPs. The chain is 3-hydroxyacyl-[acyl-carrier-protein] dehydratase FabZ from Synechococcus sp. (strain ATCC 27144 / PCC 6301 / SAUG 1402/1) (Anacystis nidulans).